The following is a 948-amino-acid chain: MSEYKDTLNLPETGFPMRGDLAKREPEMLKRWYQEDLYGEIRKAKKGKKSFVLHDGPPYANGDIHIGHALNKILKDIIIKSKTLSGFDAPYVPGWDCHGLPIELMVEKKVGKPGQKVTAAEFREKCREYAAGQVEGQKESFKRLGIMGEWDKPYRTMDFTTEANIIRALGQIADNGHLLKGFKPVHWCTDCGSALAEAEVEYKNKVSPSIDVRFKAADEAALLAKFSLNEGHQGQGDVSIVIWTTTPWTLPANRAVCLRDDLEYVLIQVEGDNPERIIVAAELAKDVMDRAGIEHFHNLGFAKGADLELTQFQHPFYDFTVPAILGDHVTTDSGTGVVHTAPGHGQEDFAVGQKYNLEVANPVGSNGVYLPDTELFAGQHVFKANDAVVETLKEKGALLHHHAYEHSYPHCWRHKTPIIFRATPQWFVSMDQAGLRAKALESIKGVQWMPEWGQSRIEGMIEGRPEWCISRQRTWGVPIALFVHKETAELHPNTSELIEKVAQVVEQKGIQAWWDIDAAELLGDDAAQYEKVLDTLDVWFDSGVTHYAVVDKREEFNGAEADMYLEGSDQHRGWFQSSLISSIAMKGKAPYKQVLTHGFVVDGHGRKMSKSIGNVVAPKDVTNKLGADILRLWVASTDYTGEVAVSDEILKRSADAYRRIRNTARFFLANLNGFNPETDIVPVEEMVALDRWAVGRALAAQNEIVKAYDEYNTHAVTQRLMHFCSIEMGSFYLDVIKDRQYTAKLGGHAQRSCQTALYYIVEALVRWMAPIMSFTADEIWNQMPASLPSGESRDKFVFTGEWFDGLFGLAEGEELNNAFWSEMQKVRGAVNKLLEAARSDKTIGGSLQAELTLFADDALAAKINKLEDELRFVLLTSAATVKPLSEKSDAAQATDIEGLFVEVRATEAEKCDRCWHHTPDVGTIEGHEKICGRCVSNVDGEGEARKFA.

Positions 58 to 68 match the 'HIGH' region motif; the sequence is PYANGDIHIGH. Glu-566 is an L-isoleucyl-5'-AMP binding site. The short motif at 607 to 611 is the 'KMSKS' region element; sequence KMSKS. Lys-610 provides a ligand contact to ATP. Positions 911, 914, 931, and 934 each coordinate Zn(2+).

Belongs to the class-I aminoacyl-tRNA synthetase family. IleS type 1 subfamily. Monomer. It depends on Zn(2+) as a cofactor.

The protein resides in the cytoplasm. It carries out the reaction tRNA(Ile) + L-isoleucine + ATP = L-isoleucyl-tRNA(Ile) + AMP + diphosphate. Functionally, catalyzes the attachment of isoleucine to tRNA(Ile). As IleRS can inadvertently accommodate and process structurally similar amino acids such as valine, to avoid such errors it has two additional distinct tRNA(Ile)-dependent editing activities. One activity is designated as 'pretransfer' editing and involves the hydrolysis of activated Val-AMP. The other activity is designated 'posttransfer' editing and involves deacylation of mischarged Val-tRNA(Ile). The protein is Isoleucine--tRNA ligase of Vibrio vulnificus (strain YJ016).